The chain runs to 437 residues: GTPase Obg (437 aa).

Residues S2–L160 enclose the Obg domain. One can recognise an OBG-type G domain in the interval A161–A338. Residues G167 to S174, F192 to V196, D214 to G217, N284 to D287, and S319 to L321 each bind GTP. Residues S174 and T194 each coordinate Mg(2+). The region spanning G359 to D437 is the OCT domain.

The protein belongs to the TRAFAC class OBG-HflX-like GTPase superfamily. OBG GTPase family. In terms of assembly, monomer. Mg(2+) is required as a cofactor.

It localises to the cytoplasm. In terms of biological role, an essential GTPase which binds GTP, GDP and possibly (p)ppGpp with moderate affinity, with high nucleotide exchange rates and a fairly low GTP hydrolysis rate. Plays a role in control of the cell cycle, stress response, ribosome biogenesis and in those bacteria that undergo differentiation, in morphogenesis control. This is GTPase Obg from Streptococcus agalactiae serotype Ia (strain ATCC 27591 / A909 / CDC SS700).